The following is a 532-amino-acid chain: Phosphoenolpyruvate carboxykinase (ATP) (532 aa).

R60, Y194, and K200 together coordinate substrate. ATP contacts are provided by residues K200, H219, and 237–245 (GLSGTGKTT). 2 residues coordinate Mn(2+): K200 and H219. D258 contributes to the Mn(2+) binding site. ATP contacts are provided by E286, R324, and T449. Residue R324 participates in substrate binding.

This sequence belongs to the phosphoenolpyruvate carboxykinase (ATP) family. Mn(2+) serves as cofactor.

It localises to the cytoplasm. The enzyme catalyses oxaloacetate + ATP = phosphoenolpyruvate + ADP + CO2. Its pathway is carbohydrate biosynthesis; gluconeogenesis. Its function is as follows. Involved in the gluconeogenesis. Catalyzes the conversion of oxaloacetate (OAA) to phosphoenolpyruvate (PEP) through direct phosphoryl transfer between the nucleoside triphosphate and OAA. The polypeptide is Phosphoenolpyruvate carboxykinase (ATP) (Ruegeria pomeroyi (strain ATCC 700808 / DSM 15171 / DSS-3) (Silicibacter pomeroyi)).